Reading from the N-terminus, the 439-residue chain is ATP-dependent RNA helicase RhlB (439 aa).

Residues 9 to 37 carry the Q motif motif; sequence QKFADLPLHPEVKQALAENGFEFCTPIQA. Positions 40–219 constitute a Helicase ATP-binding domain; it reads LPVLLQSKDI…YDHMNDPVKV (180 aa). 53 to 60 contacts ATP; the sequence is AQTGTGKT. The DEAD box motif lies at 165–168; sequence DEAD. In terms of domain architecture, Helicase C-terminal spans 243–390; sequence KMRLLLTLIE…VSNYDSSALL (148 aa). The segment at 398-439 is disordered; the sequence is KIPRKHPAGTRNLRERAGAGRPQGAHRSGGRPPRHDRTRRHS. Residues 425–439 are compositionally biased toward basic residues; sequence SGGRPPRHDRTRRHS.

Belongs to the DEAD box helicase family. RhlB subfamily. As to quaternary structure, component of the RNA degradosome, which is a multiprotein complex involved in RNA processing and mRNA degradation.

The protein resides in the cytoplasm. It catalyses the reaction ATP + H2O = ADP + phosphate + H(+). DEAD-box RNA helicase involved in RNA degradation. Has RNA-dependent ATPase activity and unwinds double-stranded RNA. In Shewanella putrefaciens (strain CN-32 / ATCC BAA-453), this protein is ATP-dependent RNA helicase RhlB.